The chain runs to 287 residues: Formamidopyrimidine-DNA glycosylase (287 aa).

Catalysis depends on P2, which acts as the Schiff-base intermediate with DNA. E3 (proton donor) is an active-site residue. K58 acts as the Proton donor; for beta-elimination activity in catalysis. The DNA site is built by H104, R123, and R166. The segment at 251–287 (RTYDREGQPCRNDGCRGVIGREVQAGRSTFYCPVCQR) adopts an FPG-type zinc-finger fold. Catalysis depends on R277, which acts as the Proton donor; for delta-elimination activity.

The protein belongs to the FPG family. Monomer. The cofactor is Zn(2+).

It catalyses the reaction Hydrolysis of DNA containing ring-opened 7-methylguanine residues, releasing 2,6-diamino-4-hydroxy-5-(N-methyl)formamidopyrimidine.. The catalysed reaction is 2'-deoxyribonucleotide-(2'-deoxyribose 5'-phosphate)-2'-deoxyribonucleotide-DNA = a 3'-end 2'-deoxyribonucleotide-(2,3-dehydro-2,3-deoxyribose 5'-phosphate)-DNA + a 5'-end 5'-phospho-2'-deoxyribonucleoside-DNA + H(+). In terms of biological role, involved in base excision repair of DNA damaged by oxidation or by mutagenic agents. Acts as a DNA glycosylase that recognizes and removes damaged bases. Has a preference for oxidized purines, such as 7,8-dihydro-8-oxoguanine (8-oxoG). Has AP (apurinic/apyrimidinic) lyase activity and introduces nicks in the DNA strand. Cleaves the DNA backbone by beta-delta elimination to generate a single-strand break at the site of the removed base with both 3'- and 5'-phosphates. The sequence is that of Formamidopyrimidine-DNA glycosylase from Phenylobacterium zucineum (strain HLK1).